Here is a 340-residue protein sequence, read N- to C-terminus: MHPRNKNAEGYDFAALAATSAALAKHIKTTQAGTASIDFANPAAVKMLNRAILMHHYGVKGWDIPAGYLCPPIPGRADYIHSVADLLATCNKKNIPSGPGVRVLDIGVGANMVYPLIGHAEYGWSFLGVDIDEAALANAQSIIGKNPELASDIELRHQPVWDNIFTGLLRSGEVFDLSICNPPFHNSPDDVHAVSQRKWNNLNKPGAKRGAAEPRLNFGGGGSELWCNGGERAFVKRMIEQSCNIPKRVMWFTSLLSQGDNLPHIEAALKKAKVVESRIIPMAQGQKQSRLVAWTFCGNGEREKWRRERWTAAPSYAVPAFAEQTAPLTAEATPPAADPV.

It belongs to the methyltransferase superfamily. METTL16/RlmF family.

The protein resides in the cytoplasm. The enzyme catalyses adenosine(1618) in 23S rRNA + S-adenosyl-L-methionine = N(6)-methyladenosine(1618) in 23S rRNA + S-adenosyl-L-homocysteine + H(+). In terms of biological role, specifically methylates the adenine in position 1618 of 23S rRNA. The polypeptide is Ribosomal RNA large subunit methyltransferase F (Dechloromonas aromatica (strain RCB)).